We begin with the raw amino-acid sequence, 187 residues long: Isopentenyl-diphosphate Delta-isomerase (187 aa).

3 residues coordinate Mn(2+): H36, H43, and H80. Positions 41 to 178 (VRHRAFTALL…RQLRLCPWFE (138 aa)) constitute a Nudix hydrolase domain. Residue E98 participates in Mg(2+) binding. Residues E127 and E129 each contribute to the Mn(2+) site. E129 is an active-site residue.

This sequence belongs to the IPP isomerase type 1 family. Mg(2+) serves as cofactor. Mn(2+) is required as a cofactor.

The protein resides in the cytoplasm. The catalysed reaction is isopentenyl diphosphate = dimethylallyl diphosphate. It participates in isoprenoid biosynthesis; dimethylallyl diphosphate biosynthesis; dimethylallyl diphosphate from isopentenyl diphosphate: step 1/1. Functionally, catalyzes the 1,3-allylic rearrangement of the homoallylic substrate isopentenyl (IPP) to its highly electrophilic allylic isomer, dimethylallyl diphosphate (DMAPP). This is Isopentenyl-diphosphate Delta-isomerase from Haloarcula marismortui (strain ATCC 43049 / DSM 3752 / JCM 8966 / VKM B-1809) (Halobacterium marismortui).